A 511-amino-acid chain; its full sequence is Myrosinase 4 (511 aa).

A signal peptide spans 1–23 (MAIPKAHYSLAVLVLLFVVVSSS). Cystine bridges form between cysteine 31–cysteine 450, cysteine 39–cysteine 445, and cysteine 230–cysteine 233. N-linked (GlcNAc...) asparagine glycans are attached at residues asparagine 46 and asparagine 53. A beta-D-glucoside is bound by residues glutamine 64, histidine 165, and 210-211 (NQ). Positions 351 and 418 each coordinate a beta-D-glucoside. Residue glutamate 418 is the Nucleophile of the active site. N-linked (GlcNAc...) asparagine glycosylation is present at asparagine 428. A beta-D-glucoside is bound by residues tryptophan 467, 474–475 (EF), and phenylalanine 483. Asparagine 489 carries an N-linked (GlcNAc...) asparagine glycan.

It belongs to the glycosyl hydrolase 1 family. In terms of tissue distribution, specifically expressed in roots.

The catalysed reaction is a thioglucoside + H2O = a sugar + a thiol.. It carries out the reaction Hydrolysis of terminal, non-reducing beta-D-glucosyl residues with release of beta-D-glucose.. Hydrolyzes sinigrin and, with lower efficiency, p-nitrophenyl beta-D-glucoside. The protein is Myrosinase 4 of Arabidopsis thaliana (Mouse-ear cress).